The primary structure comprises 496 residues: UDP-N-acetylmuramate--L-alanine ligase (496 aa).

An ATP-binding site is contributed by 122–128 (GTHGKTT).

It belongs to the MurCDEF family.

It localises to the cytoplasm. It carries out the reaction UDP-N-acetyl-alpha-D-muramate + L-alanine + ATP = UDP-N-acetyl-alpha-D-muramoyl-L-alanine + ADP + phosphate + H(+). The protein operates within cell wall biogenesis; peptidoglycan biosynthesis. Functionally, cell wall formation. The protein is UDP-N-acetylmuramate--L-alanine ligase of Mycobacterium avium (strain 104).